The primary structure comprises 541 residues: Carotenoid 9,10(9',10')-cleavage dioxygenase 1 (541 aa).

Residues histidine 222, histidine 270, histidine 336, and histidine 526 each coordinate Fe cation.

Belongs to the carotenoid oxygenase family. Fe(2+) is required as a cofactor.

It carries out the reaction all-trans-zeaxanthin + 2 O2 = 4,9-dimethyldodeca-2,4,6,8,10-pentaenedial + 2 (3R)-hydroxy-beta-ionone. In terms of biological role, cleaves a variety of carotenoids at the 9-10 and 9'-10' double bonds. Probably not involved in abscisic acid biosynthesis. This is Carotenoid 9,10(9',10')-cleavage dioxygenase 1 (CCD1) from Pisum sativum (Garden pea).